A 134-amino-acid chain; its full sequence is Profilin-3 (134 aa).

A disulfide bridge connects residues cysteine 13 and cysteine 118. The short motif at 84 to 100 (AVIRGKKGSGGITIKKT) is the Involved in PIP2 interaction element. Threonine 114 bears the Phosphothreonine mark.

Belongs to the profilin family. In terms of assembly, occurs in many kinds of cells as a complex with monomeric actin in a 1:1 ratio. Phosphorylated by MAP kinases.

The protein localises to the cytoplasm. It is found in the cytoskeleton. Functionally, binds to actin and affects the structure of the cytoskeleton. At high concentrations, profilin prevents the polymerization of actin, whereas it enhances it at low concentrations. The sequence is that of Profilin-3 from Olea europaea (Common olive).